We begin with the raw amino-acid sequence, 381 residues long: 2-oxoglutarate-dependent dioxygenase FGSG_00048 (381 aa).

The protein belongs to the iron/ascorbate-dependent oxidoreductase family. It depends on Fe(2+) as a cofactor.

It functions in the pathway mycotoxin biosynthesis. 2-oxoglutarate-dependent dioxygenase; part of the gene cluster that mediates the biosynthesis of gramillins A and B, bicyclic lipopeptides that induce cell death in maize leaves but not in wheat leaves. The nonribosomal peptide synthetase GRA1 incorporates respectively a glutamic adic (Glu), a leucine (Leu), a serine (Ser), a hydroxyglutamine (HOGln), a 2-amino decanoic acid, and 2 cysteins (CysB and CysA). The biosynthesis of 2-amino decanoic acid incorporated in gramillins could be initiated by a fatty acid synthase composed of the alpha and beta subunits FGSG_00036 and FGSG_11656. The cytochrome P450 monooxygenase FGSG_15680 could hydroxylate the fatty acid chain. Subsequent oxidation to the ketone by the oxidoreductase FGSG_00048 and transamination by aminotransferase FGSG_00049 could form 2-amino-decanoic acid. On the other hand, FGSG_15680 could also be responsible for the HO-modified glutamine at the gamma-position. Whether hydroxylation occurs on the fully assembled product or on the Gln residue prior to assembly into the gramillins requires further proof. The thioredoxin FGSG_00043 could also be required for the disulfide-bond formation between CysA and CysB. The specific involvement of the remaining proteins from the cluster is more difficult to discern, but could have broader regulatory (FGSG_00040 and FGSG_11657) or enzymatic functions (FGSG_00044 and FGSG_00045). The final C-domain of GRA1 does not possess the expected sequence of a termination CT domain, often implicated in macrocyclization and release of a cyclopeptidein fungal NRPs; and the thioesterase FGSG_00047 may act in concert with the terminal C-domain of GRA1 to catalyze the formation of the macrocyclic anhydride and release of the products. The chain is 2-oxoglutarate-dependent dioxygenase FGSG_00048 from Gibberella zeae (strain ATCC MYA-4620 / CBS 123657 / FGSC 9075 / NRRL 31084 / PH-1) (Wheat head blight fungus).